We begin with the raw amino-acid sequence, 382 residues long: 1-deoxy-D-xylulose 5-phosphate reductoisomerase (382 aa).

Positions 10, 11, 12, 13, 36, and 122 each coordinate NADPH. Lys123 lines the 1-deoxy-D-xylulose 5-phosphate pocket. Glu124 serves as a coordination point for NADPH. Asp148 is a binding site for Mn(2+). 1-deoxy-D-xylulose 5-phosphate is bound by residues Ser149, Glu150, Ser174, and His197. Residue Glu150 coordinates Mn(2+). Gly203 lines the NADPH pocket. Residues Ser210, Asn215, Lys216, and Glu219 each contribute to the 1-deoxy-D-xylulose 5-phosphate site. Glu219 provides a ligand contact to Mn(2+).

This sequence belongs to the DXR family. Requires Mg(2+) as cofactor. The cofactor is Mn(2+).

It catalyses the reaction 2-C-methyl-D-erythritol 4-phosphate + NADP(+) = 1-deoxy-D-xylulose 5-phosphate + NADPH + H(+). It participates in isoprenoid biosynthesis; isopentenyl diphosphate biosynthesis via DXP pathway; isopentenyl diphosphate from 1-deoxy-D-xylulose 5-phosphate: step 1/6. Functionally, catalyzes the NADPH-dependent rearrangement and reduction of 1-deoxy-D-xylulose-5-phosphate (DXP) to 2-C-methyl-D-erythritol 4-phosphate (MEP). In Chlorobium limicola (strain DSM 245 / NBRC 103803 / 6330), this protein is 1-deoxy-D-xylulose 5-phosphate reductoisomerase.